The chain runs to 299 residues: MNQVEMTEFPVGKPQEALYGVASTPDGALWFTLAKGNAIGRLSPDGAVSRFPLPHADGQPTTITCGPDGRPWFTLSSANAIGRLAPDGALRMFELPRPASRPFGIAGGHDGCLWFAEMAGDRIGRITIDGDIEEYDLPVKGGYPSCMAAGRDGLMWFTLNQAGAVGSISATAAPRIFPLGAADAAPVGIASDAQGALWIAQAGNGAIARFDAGGRITEFPLHSRAARPHAIAADAAGNLWFTEWGANRIGRISEAGDLAGYELAAPGSEPHGIAIDPHGCVWAALETGRLVRLQASPRD.

Substrate is bound at residue His-229. Mg(2+) is bound at residue Glu-269. His-271 functions as the Proton acceptor in the catalytic mechanism. Mg(2+) is bound at residue Glu-286.

The protein belongs to the Vgb family. In terms of assembly, monomer. Mg(2+) serves as cofactor.

Inactivates the type B streptogramin antibiotics by linearizing the lactone ring at the ester linkage, generating a free phenylglycine carboxylate and converting the threonyl moiety into 2-amino-butenoic acid. This is Virginiamycin B lyase from Bordetella bronchiseptica (strain ATCC BAA-588 / NCTC 13252 / RB50) (Alcaligenes bronchisepticus).